The following is a 91-amino-acid chain: UPF0223 protein SACOL1106 (91 aa).

It belongs to the UPF0223 family.

The chain is UPF0223 protein SACOL1106 from Staphylococcus aureus (strain COL).